A 388-amino-acid chain; its full sequence is Chorismate synthase (388 aa).

Positions 39 and 45 each coordinate NADP(+). FMN-binding positions include 130 to 132 (RSS), 251 to 252 (NA), G296, 311 to 315 (KPIPT), and R337.

This sequence belongs to the chorismate synthase family. As to quaternary structure, homotetramer. FMNH2 is required as a cofactor.

It catalyses the reaction 5-O-(1-carboxyvinyl)-3-phosphoshikimate = chorismate + phosphate. It functions in the pathway metabolic intermediate biosynthesis; chorismate biosynthesis; chorismate from D-erythrose 4-phosphate and phosphoenolpyruvate: step 7/7. Functionally, catalyzes the anti-1,4-elimination of the C-3 phosphate and the C-6 proR hydrogen from 5-enolpyruvylshikimate-3-phosphate (EPSP) to yield chorismate, which is the branch point compound that serves as the starting substrate for the three terminal pathways of aromatic amino acid biosynthesis. This reaction introduces a second double bond into the aromatic ring system. The chain is Chorismate synthase from Lactococcus lactis subsp. cremoris (strain SK11).